The primary structure comprises 225 residues: Ribonuclease 3 (225 aa).

Positions 5–127 (IEKLTRQLGY…IIGAVYLDSD (123 aa)) constitute an RNase III domain. Position 40 (E40) interacts with Mg(2+). Residue D44 is part of the active site. The Mg(2+) site is built by D113 and E116. E116 is an active-site residue. Positions 154–224 (DPKTRLQEFL…AELALEQLTN (71 aa)) constitute a DRBM domain.

This sequence belongs to the ribonuclease III family. As to quaternary structure, homodimer. Mg(2+) serves as cofactor.

Its subcellular location is the cytoplasm. It catalyses the reaction Endonucleolytic cleavage to 5'-phosphomonoester.. Functionally, digests double-stranded RNA. Involved in the processing of primary rRNA transcript to yield the immediate precursors to the large and small rRNAs (23S and 16S). Processes some mRNAs, and tRNAs when they are encoded in the rRNA operon. Processes pre-crRNA and tracrRNA of type II CRISPR loci if present in the organism. This chain is Ribonuclease 3, found in Vibrio vulnificus (strain CMCP6).